The following is a 392-amino-acid chain: DNA-directed RNA polymerase subunit Rpo1C (392 aa).

The protein belongs to the RNA polymerase beta' chain family. In terms of assembly, part of the RNA polymerase complex.

Its subcellular location is the cytoplasm. The enzyme catalyses RNA(n) + a ribonucleoside 5'-triphosphate = RNA(n+1) + diphosphate. In terms of biological role, DNA-dependent RNA polymerase (RNAP) catalyzes the transcription of DNA into RNA using the four ribonucleoside triphosphates as substrates. Forms part of the jaw domain. The sequence is that of DNA-directed RNA polymerase subunit Rpo1C from Metallosphaera sedula (strain ATCC 51363 / DSM 5348 / JCM 9185 / NBRC 15509 / TH2).